The chain runs to 236 residues: Eukaryotic translation initiation factor 3 subunit J (236 aa).

Residues 1-86 (MADDWESAAD…KEEEEQKRLA (86 aa)) form a disordered region. Over residues 28 to 46 (GEDDDEDVKESWEDEEEKK) the composition is skewed to acidic residues. Basic and acidic residues-rich tracts occupy residues 47 to 58 (DEEKPTKTEAPV) and 68 to 86 (AKLE…KRLA). The stretch at 61 to 115 (KPNKALKAKLEEQERLKEEEEQKRLAEMTPEEKLAEKLRLQKIQEESDLKSALET) forms a coiled coil.

It belongs to the eIF-3 subunit J family. In terms of assembly, component of the eukaryotic translation initiation factor 3 (eIF-3) complex. The eIF-3 complex interacts with pix.

The protein localises to the cytoplasm. Its function is as follows. Component of the eukaryotic translation initiation factor 3 (eIF-3) complex, which is involved in protein synthesis of a specialized repertoire of mRNAs and, together with other initiation factors, stimulates binding of mRNA and methionyl-tRNAi to the 40S ribosome. The eIF-3 complex specifically targets and initiates translation of a subset of mRNAs involved in cell proliferation. The polypeptide is Eukaryotic translation initiation factor 3 subunit J (Drosophila mojavensis (Fruit fly)).